The following is a 110-amino-acid chain: Urease subunit beta (110 aa).

The protein belongs to the urease beta subunit family. In terms of assembly, heterotrimer of UreA (gamma), UreB (beta) and UreC (alpha) subunits. Three heterotrimers associate to form the active enzyme.

The protein localises to the cytoplasm. The enzyme catalyses urea + 2 H2O + H(+) = hydrogencarbonate + 2 NH4(+). It participates in nitrogen metabolism; urea degradation; CO(2) and NH(3) from urea (urease route): step 1/1. The polypeptide is Urease subunit beta (Pseudoalteromonas translucida (strain TAC 125)).